Reading from the N-terminus, the 324-residue chain is NADH-ubiquinone oxidoreductase chain 1 (324 aa).

Helical transmembrane passes span I5–F25, F75–L95, L106–G126, I146–F166, T177–A197, L228–F248, Q259–I279, and F299–S319.

Belongs to the complex I subunit 1 family.

The protein localises to the mitochondrion inner membrane. It catalyses the reaction a ubiquinone + NADH + 5 H(+)(in) = a ubiquinol + NAD(+) + 4 H(+)(out). Its function is as follows. Core subunit of the mitochondrial membrane respiratory chain NADH dehydrogenase (Complex I) that is believed to belong to the minimal assembly required for catalysis. Complex I functions in the transfer of electrons from NADH to the respiratory chain. The immediate electron acceptor for the enzyme is believed to be ubiquinone. This Squalus acanthias (Spiny dogfish) protein is NADH-ubiquinone oxidoreductase chain 1 (MT-ND1).